A 169-amino-acid chain; its full sequence is GTP-dependent dephospho-CoA kinase (169 aa).

Asp-45, Asp-64, Lys-66, and Glu-121 together coordinate GTP.

It belongs to the GTP-dependent DPCK family.

The catalysed reaction is 3'-dephospho-CoA + GTP = GDP + CoA + H(+). It participates in cofactor biosynthesis; coenzyme A biosynthesis. Catalyzes the GTP-dependent phosphorylation of the 3'-hydroxyl group of dephosphocoenzyme A to form coenzyme A (CoA). This chain is GTP-dependent dephospho-CoA kinase, found in Methanosphaera stadtmanae (strain ATCC 43021 / DSM 3091 / JCM 11832 / MCB-3).